The primary structure comprises 414 residues: Histidine--tRNA ligase (414 aa).

The protein belongs to the class-II aminoacyl-tRNA synthetase family. As to quaternary structure, homodimer.

The protein resides in the cytoplasm. It catalyses the reaction tRNA(His) + L-histidine + ATP = L-histidyl-tRNA(His) + AMP + diphosphate + H(+). This is Histidine--tRNA ligase (hisS) from Mycoplasma genitalium (strain ATCC 33530 / DSM 19775 / NCTC 10195 / G37) (Mycoplasmoides genitalium).